A 191-amino-acid polypeptide reads, in one-letter code: Adenine phosphoribosyltransferase (191 aa).

It belongs to the purine/pyrimidine phosphoribosyltransferase family. Homodimer.

The protein resides in the cytoplasm. The catalysed reaction is AMP + diphosphate = 5-phospho-alpha-D-ribose 1-diphosphate + adenine. Its pathway is purine metabolism; AMP biosynthesis via salvage pathway; AMP from adenine: step 1/1. In terms of biological role, catalyzes a salvage reaction resulting in the formation of AMP, that is energically less costly than de novo synthesis. The protein is Adenine phosphoribosyltransferase of Bordetella bronchiseptica (strain ATCC BAA-588 / NCTC 13252 / RB50) (Alcaligenes bronchisepticus).